The sequence spans 191 residues: Dephospho-CoA kinase (191 aa).

A DPCK domain is found at 3–191 (AIGITGSYAS…KLILVIARKL (189 aa)). ATP is bound at residue 11 to 16 (ASGKTF).

The protein belongs to the CoaE family.

It localises to the cytoplasm. It catalyses the reaction 3'-dephospho-CoA + ATP = ADP + CoA + H(+). It participates in cofactor biosynthesis; coenzyme A biosynthesis; CoA from (R)-pantothenate: step 5/5. In terms of biological role, catalyzes the phosphorylation of the 3'-hydroxyl group of dephosphocoenzyme A to form coenzyme A. The sequence is that of Dephospho-CoA kinase from Rickettsia felis (strain ATCC VR-1525 / URRWXCal2) (Rickettsia azadi).